Consider the following 345-residue polypeptide: tRNA N6-adenosine threonylcarbamoyltransferase (345 aa).

Fe cation is bound by residues H111 and H115. Residues 134-138 (LVSGG), D167, G180, and N277 each bind substrate. D305 contributes to the Fe cation binding site.

The protein belongs to the KAE1 / TsaD family. Fe(2+) serves as cofactor.

Its subcellular location is the cytoplasm. The catalysed reaction is L-threonylcarbamoyladenylate + adenosine(37) in tRNA = N(6)-L-threonylcarbamoyladenosine(37) in tRNA + AMP + H(+). Required for the formation of a threonylcarbamoyl group on adenosine at position 37 (t(6)A37) in tRNAs that read codons beginning with adenine. Is involved in the transfer of the threonylcarbamoyl moiety of threonylcarbamoyl-AMP (TC-AMP) to the N6 group of A37, together with TsaE and TsaB. TsaD likely plays a direct catalytic role in this reaction. In Laribacter hongkongensis (strain HLHK9), this protein is tRNA N6-adenosine threonylcarbamoyltransferase.